A 345-amino-acid chain; its full sequence is Phosphoribosylformylglycinamidine cyclo-ligase (345 aa).

Belongs to the AIR synthase family.

The protein localises to the cytoplasm. The catalysed reaction is 2-formamido-N(1)-(5-O-phospho-beta-D-ribosyl)acetamidine + ATP = 5-amino-1-(5-phospho-beta-D-ribosyl)imidazole + ADP + phosphate + H(+). It participates in purine metabolism; IMP biosynthesis via de novo pathway; 5-amino-1-(5-phospho-D-ribosyl)imidazole from N(2)-formyl-N(1)-(5-phospho-D-ribosyl)glycinamide: step 2/2. The sequence is that of Phosphoribosylformylglycinamidine cyclo-ligase from Escherichia coli O45:K1 (strain S88 / ExPEC).